Here is a 469-residue protein sequence, read N- to C-terminus: Protein translocase subunit SecY (469 aa).

Over 1–20 (MSFIDSLATLGQYLPAVTKP) the chain is Cytoplasmic. Residues 21-47 (KEKPSLGQKLVWSLVAVIIYLIMASTP) form a helical membrane-spanning segment. The Extracellular segment spans residues 48–59 (LYGITSASFFKN). An intramembrane region (helical) is located at residues 60 to 67 (LILEQIIF). A discontinuously helical membrane pass occupies residues 60–88 (LILEQIIFASTTGTLAQLGIGPIITAGLI). Residues 68 to 79 (ASTTGTLAQLGI) lie within the membrane without spanning it. The segment at residues 80–88 (GPIITAGLI) is an intramembrane region (helical). Residues 89 to 109 (MQILAGSKLISIDLNDPDDRV) lie on the Cytoplasmic side of the membrane. A helical transmembrane segment spans residues 110–131 (KFTEAQKGLAFIFILVESALFG). Residues 132-146 (YVLARTSTTINASIL) are Extracellular-facing. Residues 147 to 171 (FIAGIVIAQLIVATYLILLLDELIQ) form a helical membrane-spanning segment. The Cytoplasmic segment spans residues 172-178 (KGWGLGS). A helical transmembrane segment spans residues 179–197 (GVSLFILAGVMKIMFWDMF). At 198–240 (GIASVSSQNLPIGFFPALFTALASHSDVLNLIVNTSTKNLFQP) the chain is on the extracellular side. The chain crosses the membrane as a helical span at residues 241–262 (DLVGLVTTIALIIITIYLTTMT). Residues 263 to 287 (IEIPVTSQKLRGIRRTIPLNFLYVS) lie on the Cytoplasmic side of the membrane. A helical transmembrane segment spans residues 288–309 (SIPVIFVAVLGSDIQLFASLAS). Topologically, residues 310–347 (YVSPSASNILNTVSGVFFFPPPNSAIPHSIYAVVLDPL) are extracellular. Residues 348–367 (GALEYAVVFIVLSILFGILW) form a helical membrane-spanning segment. Residues 368–410 (VDVAGLDPATQAQQLVEAGIEIPGVRNNPKIIEGILARYIYPL) lie on the Cytoplasmic side of the membrane. The helical transmembrane segment at 411-429 (AFFSSIIVGLIAVFATLLG) threads the bilayer. The Extracellular portion of the chain corresponds to 430–432 (AYG). A helical membrane pass occupies residues 433-447 (TGIGILLAVTIAIQY). At 448-469 (YSLLAYERSLEMYPLLKRLIGE) the chain is on the cytoplasmic side.

Belongs to the SecY/SEC61-alpha family. In terms of assembly, component of the Sec protein translocase complex. Heterotrimer consisting of alpha (SecY), beta (SecG) and gamma (SecE) subunits. The heterotrimers can form oligomers, although 1 heterotrimer is thought to be able to translocate proteins. Interacts with the ribosome. May interact with SecDF, and other proteins may be involved.

It is found in the cell membrane. The central subunit of the protein translocation channel SecYEG. Consists of two halves formed by TMs 1-5 and 6-10. These two domains form a lateral gate at the front which open onto the bilayer between TMs 2 and 7, and are clamped together by SecE at the back. The channel is closed by both a pore ring composed of hydrophobic SecY resides and a short helix (helix 2A) on the extracellular side of the membrane which forms a plug. The plug probably moves laterally to allow the channel to open. The ring and the pore may move independently. In Saccharolobus solfataricus (strain ATCC 35092 / DSM 1617 / JCM 11322 / P2) (Sulfolobus solfataricus), this protein is Protein translocase subunit SecY.